The following is a 293-amino-acid chain: Small ribosomal subunit protein uS3 (293 aa).

The KH type-2 domain occupies 39-110 (IRREIMKFLK…KISIKIKEVK (72 aa)).

Belongs to the universal ribosomal protein uS3 family. In terms of assembly, part of the 30S ribosomal subunit. Forms a tight complex with proteins S10 and S14.

Its function is as follows. Binds the lower part of the 30S subunit head. Binds mRNA in the 70S ribosome, positioning it for translation. The chain is Small ribosomal subunit protein uS3 from Borreliella burgdorferi (strain ATCC 35210 / DSM 4680 / CIP 102532 / B31) (Borrelia burgdorferi).